A 300-amino-acid polypeptide reads, in one-letter code: Formyltetrahydrofolate deformylase (300 aa).

The 82-residue stretch at 21 to 102 (RLLVSCPDQP…MTWSLTLASE (82 aa)) folds into the ACT domain. The active site involves D244.

This sequence belongs to the PurU family.

The catalysed reaction is (6R)-10-formyltetrahydrofolate + H2O = (6S)-5,6,7,8-tetrahydrofolate + formate + H(+). Its pathway is purine metabolism; IMP biosynthesis via de novo pathway; formate from 10-formyl-5,6,7,8-tetrahydrofolate: step 1/1. In terms of biological role, catalyzes the hydrolysis of 10-formyltetrahydrofolate (formyl-FH4) to formate and tetrahydrofolate (FH4). This is Formyltetrahydrofolate deformylase from Bacillus subtilis (strain 168).